Reading from the N-terminus, the 1296-residue chain is Phosphoribosylformylglycinamidine synthase (1296 aa).

The interval 304-323 is disordered; that stretch reads WPGAATGSGGEIRDEGATGR. Residues 306-317 and Ala-677 contribute to the ATP site; that span reads GAATGSGGEIRD. Positions 678, 717, 721, and 885 each coordinate Mg(2+). Ser-887 provides a ligand contact to ATP. A compositionally biased stretch (basic and acidic residues) spans 1000 to 1013; it reads PDCADQEHQAKQDE. Positions 1000 to 1019 are disordered; the sequence is PDCADQEHQAKQDESDPGLN. The Glutamine amidotransferase type-1 domain maps to 1043–1296; the sequence is VAVLREQGVN…MFRNARKQLG (254 aa). The active-site Nucleophile is the Cys-1136. Active-site residues include His-1261 and Glu-1263.

The protein in the N-terminal section; belongs to the FGAMS family. As to quaternary structure, monomer.

Its subcellular location is the cytoplasm. The catalysed reaction is N(2)-formyl-N(1)-(5-phospho-beta-D-ribosyl)glycinamide + L-glutamine + ATP + H2O = 2-formamido-N(1)-(5-O-phospho-beta-D-ribosyl)acetamidine + L-glutamate + ADP + phosphate + H(+). The protein operates within purine metabolism; IMP biosynthesis via de novo pathway; 5-amino-1-(5-phospho-D-ribosyl)imidazole from N(2)-formyl-N(1)-(5-phospho-D-ribosyl)glycinamide: step 1/2. Its function is as follows. Phosphoribosylformylglycinamidine synthase involved in the purines biosynthetic pathway. Catalyzes the ATP-dependent conversion of formylglycinamide ribonucleotide (FGAR) and glutamine to yield formylglycinamidine ribonucleotide (FGAM) and glutamate. The protein is Phosphoribosylformylglycinamidine synthase of Yersinia pestis bv. Antiqua (strain Nepal516).